We begin with the raw amino-acid sequence, 198 residues long: Nucleoid occlusion factor SlmA (198 aa).

The 62-residue stretch at 9–70 (RNRREEILQS…SLIEFIEDSL (62 aa)) folds into the HTH tetR-type domain. Positions 33–52 (TTAKLAASVGVSEAALYRHF) form a DNA-binding region, H-T-H motif. Positions 117–145 (EQDRLQGRINQLFERIEAQLRQVLREKKM) form a coiled coil.

Belongs to the nucleoid occlusion factor SlmA family. Homodimer. Interacts with FtsZ.

It localises to the cytoplasm. The protein resides in the nucleoid. Required for nucleoid occlusion (NO) phenomenon, which prevents Z-ring formation and cell division over the nucleoid. Acts as a DNA-associated cell division inhibitor that binds simultaneously chromosomal DNA and FtsZ, and disrupts the assembly of FtsZ polymers. SlmA-DNA-binding sequences (SBS) are dispersed on non-Ter regions of the chromosome, preventing FtsZ polymerization at these regions. In Cronobacter sakazakii (strain ATCC BAA-894) (Enterobacter sakazakii), this protein is Nucleoid occlusion factor SlmA.